The primary structure comprises 172 residues: MGSTTSSQKFIARNRAPRVQIEYDVELYGAEKKVQLPFVMGVMADLAGKPAEPQAAVADRKFLEIDVDNFDARLKAMKPRVAFNVPNVLTGEGNLSLDITFESMDDFSPAAVARKVDSLNKLLEARTQLANLLTYMDGKTGAEEMIMKAIKDPALLQALASAPKPKDDEPQA.

In terms of assembly, forms a heterodimer with TssC1. Heterodimers assemble to form the sheath of the T6SS machinery. Interacts with TagJ. Interacts with TssA1.

Core component of the H1 type VI (H1-T6SS) secretion system that plays a role in the release of toxins targeting both eukaryotic and prokaryotic species. Forms the sheath of the structure by assembling into tubules together with TssC1 resulting in the stacking of cogwheel-like structures showing predominantly a 12-fold symmetry. The sheath contracts to provide the energy needed for effector delivery. The chain is Type VI secretion system sheath protein TssB1 from Pseudomonas aeruginosa (strain ATCC 15692 / DSM 22644 / CIP 104116 / JCM 14847 / LMG 12228 / 1C / PRS 101 / PAO1).